Reading from the N-terminus, the 218-residue chain is MAQISAKLVKELRDKTGAGMMDCKKALGETNGDITKAIEWLRQKGITSAEKKAGRVAAEGLIESYIHTGGGIGVLVEVNCETDFVARGDIFKDLAKGIAMQIAACPNVQYVKVDDIPTEIADKEREIEMGRDDLAGKPDNIKEKIVEGRIAKRLKELSLMDQPYIRDQNMTVEELVKQSIATIGENIQIRRFQRFVLGEGIEKKEEDFAAEVAAQMGQ.

Residues 82–85 (TDFV) form an involved in Mg(2+) ion dislocation from EF-Tu region.

The protein belongs to the EF-Ts family.

The protein resides in the cytoplasm. Functionally, associates with the EF-Tu.GDP complex and induces the exchange of GDP to GTP. It remains bound to the aminoacyl-tRNA.EF-Tu.GTP complex up to the GTP hydrolysis stage on the ribosome. The protein is Elongation factor Ts of Picosynechococcus sp. (strain ATCC 27264 / PCC 7002 / PR-6) (Agmenellum quadruplicatum).